Consider the following 149-residue polypeptide: Deoxyuridine 5'-triphosphate nucleotidohydrolase (149 aa).

Residues 70 to 72 (RSG), asparagine 83, and 87 to 89 (LID) contribute to the substrate site.

It belongs to the dUTPase family. The cofactor is Mg(2+).

The enzyme catalyses dUTP + H2O = dUMP + diphosphate + H(+). Its pathway is pyrimidine metabolism; dUMP biosynthesis; dUMP from dCTP (dUTP route): step 2/2. Functionally, this enzyme is involved in nucleotide metabolism: it produces dUMP, the immediate precursor of thymidine nucleotides and it decreases the intracellular concentration of dUTP so that uracil cannot be incorporated into DNA. This is Deoxyuridine 5'-triphosphate nucleotidohydrolase from Blochmanniella pennsylvanica (strain BPEN).